The following is a 456-amino-acid chain: Probable galactarate/D-glucarate transporter GudP (456 aa).

Transmembrane regions (helical) follow at residues 11–31 (YLIL…RATI), 51–71 (YIFS…GWLL), 78–96 (KVYA…LQGY), 102–119 (ISTA…VGLA), 246–266 (IYLG…WFPV), 280–300 (GIIA…GGVI), 317–337 (TPIV…YVDA), 341–361 (VVCF…GWAV), 381–401 (FGNL…AATG), and 408–428 (SSWV…VGEI).

This sequence belongs to the major facilitator superfamily. Phthalate permease family.

Its subcellular location is the cell inner membrane. It carries out the reaction galactarate(in) + H(+)(in) = galactarate(out) + H(+)(out). The enzyme catalyses D-glucarate(in) + H(+)(in) = D-glucarate(out) + H(+)(out). Functionally, probably involved in the uptake of galactarate and/or D-glucarate. In Pseudomonas putida (Arthrobacter siderocapsulatus), this protein is Probable galactarate/D-glucarate transporter GudP (gudP).